We begin with the raw amino-acid sequence, 592 residues long: PiggyBac transposable element-derived protein 2 (592 aa).

A disordered region spans residues 31-69 (EEEESNNNREEIFIAPPDNAAGEFTDEDSGDEDSQRGAH).

The protein is PiggyBac transposable element-derived protein 2 (PGBD2) of Homo sapiens (Human).